The primary structure comprises 491 residues: Probable Xaa-Pro aminopeptidase AFLA_084750 (491 aa).

Aspartate 271, aspartate 282, glutamate 419, and glutamate 458 together coordinate Mn(2+).

It belongs to the peptidase M24B family. Mn(2+) is required as a cofactor.

It carries out the reaction Release of any N-terminal amino acid, including proline, that is linked to proline, even from a dipeptide or tripeptide.. In terms of biological role, catalyzes the removal of a penultimate prolyl residue from the N-termini of peptides. The sequence is that of Probable Xaa-Pro aminopeptidase AFLA_084750 from Aspergillus flavus (strain ATCC 200026 / FGSC A1120 / IAM 13836 / NRRL 3357 / JCM 12722 / SRRC 167).